The sequence spans 132 residues: Sirohydrochlorin cobaltochelatase (132 aa).

Catalysis depends on His-10, which acts as the Proton acceptor. A Co(2+)-binding site is contributed by His-10. Substrate-binding positions include Arg-46 and 69–74; that span reads ISYGLH. His-74 provides a ligand contact to Co(2+).

This sequence belongs to the CbiX family. CbiXS subfamily. Homotetramer; dimer of dimers.

It carries out the reaction Co-sirohydrochlorin + 2 H(+) = sirohydrochlorin + Co(2+). Its pathway is cofactor biosynthesis; adenosylcobalamin biosynthesis; cob(II)yrinate a,c-diamide from sirohydrochlorin (anaerobic route): step 1/10. In terms of biological role, catalyzes the insertion of Co(2+) into sirohydrochlorin as part of the anaerobic pathway to cobalamin biosynthesis. The chain is Sirohydrochlorin cobaltochelatase from Archaeoglobus fulgidus (strain ATCC 49558 / DSM 4304 / JCM 9628 / NBRC 100126 / VC-16).